The following is a 416-amino-acid chain: 4-hydroxy-3-methylbut-2-en-1-yl diphosphate synthase (flavodoxin) (416 aa).

[4Fe-4S] cluster is bound by residues cysteine 304, cysteine 307, cysteine 350, and glutamate 357.

It belongs to the IspG family. [4Fe-4S] cluster is required as a cofactor.

The enzyme catalyses (2E)-4-hydroxy-3-methylbut-2-enyl diphosphate + oxidized [flavodoxin] + H2O + 2 H(+) = 2-C-methyl-D-erythritol 2,4-cyclic diphosphate + reduced [flavodoxin]. The protein operates within isoprenoid biosynthesis; isopentenyl diphosphate biosynthesis via DXP pathway; isopentenyl diphosphate from 1-deoxy-D-xylulose 5-phosphate: step 5/6. Converts 2C-methyl-D-erythritol 2,4-cyclodiphosphate (ME-2,4cPP) into 1-hydroxy-2-methyl-2-(E)-butenyl 4-diphosphate. The polypeptide is 4-hydroxy-3-methylbut-2-en-1-yl diphosphate synthase (flavodoxin) (Burkholderia pseudomallei (strain K96243)).